The primary structure comprises 515 residues: Protein DETOXIFICATION 32 (515 aa).

Basic and acidic residues predominate over residues 1–26 (METLNVDHEDTISSEQEHRAHTKSDT). The segment at 1 to 30 (METLNVDHEDTISSEQEHRAHTKSDTDMPP) is disordered. 12 consecutive transmembrane segments (helical) span residues 48-68 (LWWLAGPAIFTSFCQYSLGAV), 90-110 (VISGFSVGIMLGMGSALATLC), 131-151 (IILNSCALLLCLFYVFATPLL), 167-187 (FSLWMIPQLFAYAVNFATAKF), 194-214 (VIAMAVIAATVLLQHTLLSWL), 225-245 (GGAVVLNMSWWLIDVTQIVYI), 276-296 (AVMVCLEVWYFMALILFAGYL), 303-323 (VAALSICMNILGWPIMVAFGF), 347-367 (LIVAMITSVSIGIVISVTLIV), 392-412 (LLALTIVINNIQPVLSGVAVG), 418-438 (IVAYVNIGCYYLCGIPIGLVL), and 448-468 (GIWTGMLTGTVVQTSVLLFII). The span at 488–497 (GDQSNKREEI) shows a compositional bias: basic and acidic residues. Positions 488–515 (GDQSNKREEIDLCEEDENNSNGENNHRK) are disordered. Positions 506–515 (NSNGENNHRK) are enriched in low complexity.

It belongs to the multi antimicrobial extrusion (MATE) (TC 2.A.66.1) family.

The protein resides in the membrane. The polypeptide is Protein DETOXIFICATION 32 (Arabidopsis thaliana (Mouse-ear cress)).